The chain runs to 125 residues: Large ribosomal subunit protein bL12 (125 aa).

Belongs to the bacterial ribosomal protein bL12 family. In terms of assembly, homodimer. Part of the ribosomal stalk of the 50S ribosomal subunit. Forms a multimeric L10(L12)X complex, where L10 forms an elongated spine to which 2 to 4 L12 dimers bind in a sequential fashion. Binds GTP-bound translation factors.

Forms part of the ribosomal stalk which helps the ribosome interact with GTP-bound translation factors. Is thus essential for accurate translation. This chain is Large ribosomal subunit protein bL12, found in Parabacteroides distasonis (strain ATCC 8503 / DSM 20701 / CIP 104284 / JCM 5825 / NCTC 11152).